Reading from the N-terminus, the 115-residue chain is Large ribosomal subunit protein uL22 (115 aa).

It belongs to the universal ribosomal protein uL22 family. Part of the 50S ribosomal subunit.

Its function is as follows. This protein binds specifically to 23S rRNA; its binding is stimulated by other ribosomal proteins, e.g. L4, L17, and L20. It is important during the early stages of 50S assembly. It makes multiple contacts with different domains of the 23S rRNA in the assembled 50S subunit and ribosome. Functionally, the globular domain of the protein is located near the polypeptide exit tunnel on the outside of the subunit, while an extended beta-hairpin is found that lines the wall of the exit tunnel in the center of the 70S ribosome. This chain is Large ribosomal subunit protein uL22, found in Endomicrobium trichonymphae.